Consider the following 219-residue polypeptide: tRNA (guanine-N(7)-)-methyltransferase (219 aa).

Glu44, Asp69, Glu102, and Asn125 together coordinate S-adenosyl-L-methionine. Residues Lys129 and Asp161 each coordinate substrate.

It belongs to the class I-like SAM-binding methyltransferase superfamily. TrmB family.

It carries out the reaction guanosine(46) in tRNA + S-adenosyl-L-methionine = N(7)-methylguanosine(46) in tRNA + S-adenosyl-L-homocysteine. The protein operates within tRNA modification; N(7)-methylguanine-tRNA biosynthesis. Catalyzes the formation of N(7)-methylguanine at position 46 (m7G46) in tRNA. This is tRNA (guanine-N(7)-)-methyltransferase from Clostridium perfringens (strain 13 / Type A).